A 176-amino-acid polypeptide reads, in one-letter code: Ribosome maturation factor RimM (176 aa).

The 81-residue stretch at 96–176 folds into the PRC barrel domain; that stretch reads PEDEFYWRDL…QILVDWDPDF (81 aa).

The protein belongs to the RimM family. Binds ribosomal protein uS19.

Its subcellular location is the cytoplasm. Its function is as follows. An accessory protein needed during the final step in the assembly of 30S ribosomal subunit, possibly for assembly of the head region. Essential for efficient processing of 16S rRNA. May be needed both before and after RbfA during the maturation of 16S rRNA. It has affinity for free ribosomal 30S subunits but not for 70S ribosomes. The sequence is that of Ribosome maturation factor RimM from Shewanella piezotolerans (strain WP3 / JCM 13877).